Consider the following 174-residue polypeptide: NADH-ubiquinone oxidoreductase chain 6 (174 aa).

The next 4 helical transmembrane spans lie at 24–44 (LALG…TGLM), 53–73 (ILFL…TSLA), 82–102 (MKLT…SFIM), and 143–163 (FITI…VKIT).

The protein belongs to the complex I subunit 6 family.

It is found in the mitochondrion membrane. It carries out the reaction a ubiquinone + NADH + 5 H(+)(in) = a ubiquinol + NAD(+) + 4 H(+)(out). Functionally, core subunit of the mitochondrial membrane respiratory chain NADH dehydrogenase (Complex I) that is believed to belong to the minimal assembly required for catalysis. Complex I functions in the transfer of electrons from NADH to the respiratory chain. The immediate electron acceptor for the enzyme is believed to be ubiquinone. The polypeptide is NADH-ubiquinone oxidoreductase chain 6 (mt:ND6) (Drosophila melanogaster (Fruit fly)).